Consider the following 452-residue polypeptide: Phosphoglucosamine mutase (452 aa).

Ser-101 (phosphoserine intermediate) is an active-site residue. The Mg(2+) site is built by Ser-101, Asp-241, Asp-243, and Asp-245. A Phosphoserine modification is found at Ser-101.

The protein belongs to the phosphohexose mutase family. Requires Mg(2+) as cofactor. Post-translationally, activated by phosphorylation.

The catalysed reaction is alpha-D-glucosamine 1-phosphate = D-glucosamine 6-phosphate. Its function is as follows. Catalyzes the conversion of glucosamine-6-phosphate to glucosamine-1-phosphate. The chain is Phosphoglucosamine mutase from Lactococcus lactis subsp. cremoris (strain MG1363).